The primary structure comprises 1118 residues: Isoleucine--tRNA ligase (1118 aa).

The 'HIGH' region motif lies at 64–74 (PFANGLPHYGH). Residues 647-651 (KLSKR) carry the 'KMSKS' region motif. Residue K650 participates in ATP binding.

This sequence belongs to the class-I aminoacyl-tRNA synthetase family. IleS type 2 subfamily. Monomer. Zn(2+) is required as a cofactor.

The protein localises to the cytoplasm. It carries out the reaction tRNA(Ile) + L-isoleucine + ATP = L-isoleucyl-tRNA(Ile) + AMP + diphosphate. Functionally, catalyzes the attachment of isoleucine to tRNA(Ile). As IleRS can inadvertently accommodate and process structurally similar amino acids such as valine, to avoid such errors it has two additional distinct tRNA(Ile)-dependent editing activities. One activity is designated as 'pretransfer' editing and involves the hydrolysis of activated Val-AMP. The other activity is designated 'posttransfer' editing and involves deacylation of mischarged Val-tRNA(Ile). The protein is Isoleucine--tRNA ligase of Ehrlichia ruminantium (strain Gardel).